The chain runs to 1153 residues: Integrin alpha-M (1153 aa).

Positions 1–16 are cleaved as a signal peptide; it reads MTLKALLVTALALCHG. Residues 17–1105 are Extracellular-facing; that stretch reads FNLDTEHPMT…TKVEPYEVHN (1089 aa). FG-GAP repeat units lie at residues 18-75 and 76-135; these read NLDT…RCHP and IPLQ…RPPQ. Residue N58 is glycosylated (N-linked (GlcNAc...) asparagine). A disulfide bridge links C66 with C73. N86 carries an N-linked (GlcNAc...) asparagine glycan. Cysteines 105 and 123 form a disulfide. One can recognise a VWFA domain in the interval 164 to 338; sequence IDFQKMKEFV…QEKIFAIEGT (175 aa). FG-GAP repeat units follow at residues 339–390, 391–442, 443–503, 506–564, and 569–629; these read QTGS…VTFI, NTTR…FGTW, EPHT…RARW, EALL…ASLS, and HRII…FSPK. N-linked (GlcNAc...) asparagine glycosylation occurs at N391. Ca(2+) contacts are provided by D465, D467, D469, N471, N473, D529, N531, D533, D537, D592, D596, and D600. C654 and C711 are oxidised to a cystine. N696, N734, N772, N801, N881, N907, N941, N980, N994, and N1022 each carry an N-linked (GlcNAc...) asparagine glycan. A disulfide bridge connects residues C770 and C776. 2 disulfide bridges follow: C999/C1023 and C1028/C1033. N-linked (GlcNAc...) asparagine glycosylation is found at N1045, N1051, and N1076. A helical membrane pass occupies residues 1106-1129; that stretch reads PVPLIVGSSIGGLVLLALITAGLY. Over 1130–1153 the chain is Cytoplasmic; sequence KLGFFKRQYKDMMNEAAPQDAPPQ. A GFFKR motif motif is present at residues 1132-1136; sequence GFFKR.

It belongs to the integrin alpha chain family. Heterodimer of an alpha and a beta subunit. ITGAM associates with ITGB2. Found in a complex with CD177 and ITGB2/CD18. Interacts with JAM3. Interacts with THBD. Interacts with complement factor H/CFH; this interaction mediates adhesion of neutrophils to pathogens leading to pathogen clearance. Interacts with TMEM268; this interaction inhibits ITGAM degradation via the endosome-lysosome pathway. As to expression, predominantly expressed in monocytes and granulocytes. Expressed in a subset of peritoneal mast cells. Expressed in microglia (at protein level).

The protein resides in the cell membrane. It is found in the membrane raft. Functionally, integrin ITGAM/ITGB2 is implicated in various adhesive interactions of monocytes, macrophages and granulocytes as well as in mediating the uptake of complement-coated particles and pathogens. It is identical with CR-3, the receptor for the iC3b fragment of the third complement component. It probably recognizes the R-G-D peptide in C3b. Integrin ITGAM/ITGB2 is also a receptor for fibrinogen, factor X and ICAM1. It recognizes P1 and P2 peptides of fibrinogen gamma chain. Regulates neutrophil migration. In association with beta subunit ITGB2/CD18, required for CD177-PRTN3-mediated activation of TNF primed neutrophils. May regulate phagocytosis-induced apoptosis in extravasated neutrophils. May play a role in mast cell development. Required with TYROBP/DAP12 in microglia to control production of microglial superoxide ions which promote the neuronal apoptosis that occurs during brain development. The chain is Integrin alpha-M (Itgam) from Mus musculus (Mouse).